The following is a 519-amino-acid chain: SMR domain-containing protein At5g58720 (519 aa).

Positions 1–15 are enriched in basic residues; the sequence is MKQKNQHKKKKKRSC. Disordered regions lie at residues 1 to 47 and 92 to 128; these read MKQK…REIE and ESGD…CSED. The span at 28–47 shows a compositional bias: basic and acidic residues; sequence GNKKDVEEERKDGEGKREIE. Positions 98–127 are enriched in low complexity; that stretch reads STSSVASGSSGQETASTSEYGAGSSSSCSE. In terms of domain architecture, Smr spans 428–502; it reads IDLHGQHVKP…NRGTLLIKLD (75 aa).

In terms of assembly, interacts with PRL1.

The sequence is that of SMR domain-containing protein At5g58720 from Arabidopsis thaliana (Mouse-ear cress).